Reading from the N-terminus, the 104-residue chain is Matrix Gla protein (104 aa).

A signal peptide spans 1–19; that stretch reads MKSLLPLAILAALAVATLC. Glutamate 21 bears the 4-carboxyglutamate mark. A phosphoserine mark is found at serine 22, serine 25, and serine 28. A Gla domain is found at 51–97; that stretch reads RAKAQKRVQERNKPAYEINREACDDYKLCERYAMVYGYNAAYNRYFR. A 4-carboxyglutamate mark is found at glutamate 60, glutamate 67, and glutamate 71. Cysteine 73 and cysteine 79 form a disulfide bridge.

It belongs to the osteocalcin/matrix Gla protein family. Post-translationally, requires vitamin K-dependent gamma-carboxylation for its function.

It is found in the secreted. In terms of biological role, associates with the organic matrix of bone and cartilage. Thought to act as an inhibitor of bone formation. The protein is Matrix Gla protein (Mgp) of Mus musculus (Mouse).